The chain runs to 371 residues: Serpentine receptor class delta-1 (371 aa).

The next 7 helical transmembrane spans lie at 31–51, 62–82, 109–129, 148–168, 209–229, 267–287, and 295–315; these read LSEV…YVIF, AVLL…SLLA, CFFC…ILLI, MIVI…FYFW, IPSL…YFII, AIPI…FGII, and ITFR…FIFI. The tract at residues 344–371 is disordered; sequence EKFNQPPKQPTNPAQQSANNDAAKTEKV. Residues 354–365 are compositionally biased toward polar residues; sequence TNPAQQSANNDA.

The protein belongs to the nematode receptor-like protein srd family.

The protein resides in the membrane. The sequence is that of Serpentine receptor class delta-1 (srd-1) from Caenorhabditis elegans.